A 308-amino-acid chain; its full sequence is Elongation factor Ts (308 aa).

Positions T80 to V83 are involved in Mg(2+) ion dislocation from EF-Tu.

This sequence belongs to the EF-Ts family.

The protein localises to the cytoplasm. Functionally, associates with the EF-Tu.GDP complex and induces the exchange of GDP to GTP. It remains bound to the aminoacyl-tRNA.EF-Tu.GTP complex up to the GTP hydrolysis stage on the ribosome. This Rhizobium etli (strain ATCC 51251 / DSM 11541 / JCM 21823 / NBRC 15573 / CFN 42) protein is Elongation factor Ts.